Reading from the N-terminus, the 103-residue chain is Large ribosomal subunit protein bL21 (103 aa).

It belongs to the bacterial ribosomal protein bL21 family. In terms of assembly, part of the 50S ribosomal subunit. Contacts protein L20.

In terms of biological role, this protein binds to 23S rRNA in the presence of protein L20. This chain is Large ribosomal subunit protein bL21, found in Aliivibrio fischeri (strain ATCC 700601 / ES114) (Vibrio fischeri).